Here is a 319-residue protein sequence, read N- to C-terminus: Dehydrogenase/reductase SDR family member 9 (319 aa).

An N-terminal signal peptide occupies residues 1 to 20 (MLFWLLALLFLCAFLWNYKG). NAD(+) is bound by residues 34–58 (ITGCDTGFGNLAARTFDKKGFRVIA) and Asp83. A substrate-binding site is contributed by Ser164. Tyr176 serves as the catalytic Proton acceptor. Position 180 (Lys180) interacts with NAD(+).

It belongs to the short-chain dehydrogenases/reductases (SDR) family. As to quaternary structure, homotetramer.

Its subcellular location is the microsome membrane. The protein resides in the endoplasmic reticulum membrane. The catalysed reaction is 3beta-hydroxy-5alpha-pregnane-20-one + NAD(+) = 5alpha-pregnane-3,20-dione + NADH + H(+). It catalyses the reaction 17beta-hydroxy-5alpha-androstan-3-one + NAD(+) = 5alpha-androstan-3,17-dione + NADH + H(+). It carries out the reaction androsterone + NAD(+) = 5alpha-androstan-3,17-dione + NADH + H(+). The enzyme catalyses 5alpha-androstane-3alpha,17beta-diol + NAD(+) = 17beta-hydroxy-5alpha-androstan-3-one + NADH + H(+). The catalysed reaction is all-trans-retinol + NAD(+) = all-trans-retinal + NADH + H(+). It catalyses the reaction 3alpha-hydroxy-5alpha-pregnan-20-one + NAD(+) = 5alpha-pregnane-3,20-dione + NADH + H(+). 3-alpha-hydroxysteroid dehydrogenase that converts 3-alpha-tetrahydroprogesterone (allopregnanolone) to dihydroxyprogesterone and 3-alpha-androstanediol to dihydroxyprogesterone. Also plays a role in the biosynthesis of retinoic acid. Can utilize both NADH and NADPH. The protein is Dehydrogenase/reductase SDR family member 9 (Dhrs9) of Mus musculus (Mouse).